We begin with the raw amino-acid sequence, 694 residues long: Voltage-gated chloride channel TMC4 (694 aa).

Residues 1 to 21 (MEAWGQSPACSSSRKARTGPS) form a disordered region. The Extracellular portion of the chain corresponds to 1-150 (MEAWGQSPAC…GTESYFSLLR (150 aa)). Residues 151-171 (FLLFLNLVASVIEICMKLIPT) form a helical membrane-spanning segment. Topologically, residues 172-231 (WLEGAPPGPPGPNISSPCGSYIPHTHGLVAFPTQLFNLLSGEGYLEWSPLFYGFYPPRSN) are cytoplasmic. The helical transmembrane segment at 232–252 (LAITYLCSVFAISVIYLLCIL) threads the bilayer. Topologically, residues 253-330 (RRSVSGLKET…SQRAKVWSMR (78 aa)) are extracellular. Residues 331-351 (ALLNVLVLALLGAAFYGIYWA) traverse the membrane as a helical segment. Residues 352–376 (TEYTLTLQETPLVRQTPLFKLLVDY) lie on the Cytoplasmic side of the membrane. The helical transmembrane segment at 377 to 397 (LPSIFISLFNFVLPPVFKFIA) threads the bilayer. Topologically, residues 398-407 (SLEGYTQSRQ) are extracellular. A helical membrane pass occupies residues 408–428 (IVLILLRTVFLRLASLVFLLV). The Cytoplasmic segment spans residues 429-465 (SLWSQITCGGNMEAEGCKACGYNYKEIPCWETRLGQE). Residues 466–486 (MYKLVLFDLLMGLLVTLLVQF) form a helical membrane-spanning segment. At 487 to 513 (PRKILCGLCPGALGRLSGTLEFQVPDE) the chain is on the extracellular side. The chain crosses the membrane as a helical span at residues 514 to 534 (VLGLIYAQTVVWVGSFFCPLL). Position 535 (P535) is a topological domain, cytoplasmic. The chain crosses the membrane as a helical span at residues 536–556 (LINTAKFLILFCLKKITLFSI). Topologically, residues 557-574 (YSPASRTFRASTANFFFP) are extracellular. A helical transmembrane segment spans residues 575–595 (LVLLVGLAISAVPVLYSIFLI). The Cytoplasmic portion of the chain corresponds to 596–635 (PPSKLCGPFRGKLSIWAQIPEAIESLPQTAQNFLYFLGTQ). Residues 636 to 656 (AFTVPLLILSSILMMYTVALA) traverse the membrane as a helical segment. Residues 657-694 (NCYGRLISELKRQIETEVQNKVFLAQRAVALSSRNGTS) are Extracellular-facing. N691 carries N-linked (GlcNAc...) asparagine glycosylation.

Belongs to the TMC family. Expressed in taste bud cells of the posterior tongue. Ubiquitously expressed.

It is found in the membrane. The enzyme catalyses chloride(in) = chloride(out). Functionally, voltage-gated chloride channel involved in high-concentration salt taste sensation. Depolarization induced by high NaCl concentration may trigger the activation of TMC4-mediated chloride influx into taste bud cells, helping the return to resting potential. Also allows permeation of organic anions including gluconate, but their current amplitudes at positive potentials are less than that of chloride. Involved in pH and temperature-dependent modulation of salty taste. This is Voltage-gated chloride channel TMC4 from Mus musculus (Mouse).